A 160-amino-acid chain; its full sequence is Type IV major fimbrial protein FimA (160 aa).

The propeptide at 1-7 (MKSLQKG) is leader sequence. Residue Phe-8 is modified to N-methylphenylalanine. Residues 8 to 28 (FTLIELMIVVAIIGILAAFAI) form a helical membrane-spanning segment. Cys-63 and Cys-105 are disulfide-bonded.

The protein belongs to the N-Me-Phe pilin family. As to quaternary structure, the pili are polar flexible filaments of about 5.4 nanometers diameter and 2.5 micrometers average length; they consist of only a single polypeptide chain arranged in a helical configuration of five subunits per turn in the assembled pilus.

The protein localises to the fimbrium. Its subcellular location is the membrane. Its function is as follows. Major component of the type IV fimbriae that plays an essential role in twitching motility, natural transformation, and protease secretion. The chain is Type IV major fimbrial protein FimA (fimA) from Dichelobacter nodosus (Bacteroides nodosus).